We begin with the raw amino-acid sequence, 215 residues long: Pyridoxine/pyridoxamine 5'-phosphate oxidase (215 aa).

Substrate-binding positions include 9–12 (RRDY) and Lys-69. Residues 64–69 (RILLLK), 79–80 (FT), Lys-86, and Gln-108 contribute to the FMN site. The substrate site is built by Tyr-126, Arg-130, and Ser-134. FMN-binding positions include 143–144 (QS) and Trp-188. 194–196 (RLH) contributes to the substrate binding site. Arg-198 is a binding site for FMN.

Belongs to the pyridoxamine 5'-phosphate oxidase family. As to quaternary structure, homodimer. Requires FMN as cofactor.

The catalysed reaction is pyridoxamine 5'-phosphate + O2 + H2O = pyridoxal 5'-phosphate + H2O2 + NH4(+). It carries out the reaction pyridoxine 5'-phosphate + O2 = pyridoxal 5'-phosphate + H2O2. Its pathway is cofactor metabolism; pyridoxal 5'-phosphate salvage; pyridoxal 5'-phosphate from pyridoxamine 5'-phosphate: step 1/1. The protein operates within cofactor metabolism; pyridoxal 5'-phosphate salvage; pyridoxal 5'-phosphate from pyridoxine 5'-phosphate: step 1/1. Functionally, catalyzes the oxidation of either pyridoxine 5'-phosphate (PNP) or pyridoxamine 5'-phosphate (PMP) into pyridoxal 5'-phosphate (PLP). This Pseudomonas fluorescens (strain Pf0-1) protein is Pyridoxine/pyridoxamine 5'-phosphate oxidase.